The primary structure comprises 195 residues: 3-isopropylmalate dehydratase small subunit (195 aa).

This sequence belongs to the LeuD family. LeuD type 1 subfamily. Heterodimer of LeuC and LeuD.

It carries out the reaction (2R,3S)-3-isopropylmalate = (2S)-2-isopropylmalate. Its pathway is amino-acid biosynthesis; L-leucine biosynthesis; L-leucine from 3-methyl-2-oxobutanoate: step 2/4. Its function is as follows. Catalyzes the isomerization between 2-isopropylmalate and 3-isopropylmalate, via the formation of 2-isopropylmaleate. The polypeptide is 3-isopropylmalate dehydratase small subunit (Salinispora arenicola (strain CNS-205)).